The primary structure comprises 475 residues: Eukaryotic translation initiation factor 2 subunit 3 (475 aa).

In terms of domain architecture, tr-type G spans 38–247 (QATINIGTIG…IVNKIPVPPR (210 aa)). The tract at residues 47–54 (GHVAHGKS) is G1. 50-55 (AHGKST) contacts GTP. The G2 stretch occupies residues 75–79 (NITIK). Positions 133-136 (DCPG) are G3. GTP contacts are provided by residues 189 to 192 (NKID) and 224 to 226 (SAQ). The G4 stretch occupies residues 189–192 (NKID). A G5 region spans residues 224-226 (SAQ). The segment at 456–468 (GQIFGGKTITPVL) is interacts with CDC123.

This sequence belongs to the TRAFAC class translation factor GTPase superfamily. Classic translation factor GTPase family. EIF2G subfamily. Eukaryotic translation initiation factor 2 eIF2 is a heterotrimeric complex composed of an alpha, a beta and a gamma subunit. The factors eIF-1, eIF-2, eIF-3, TIF5/eIF-5 and methionyl-tRNAi form a multifactor complex (MFC) that may bind to the 40S ribosome.

It is found in the cytoplasm. The protein resides in the cytosol. It carries out the reaction GTP + H2O = GDP + phosphate + H(+). Its function is as follows. As a subunit of eukaryotic initiation factor 2 eIF2, involved in the early steps of protein synthesis. In the presence of GTP, eIF-2 forms a ternary complex with initiator tRNA Met-tRNAi and then recruits the 40S ribosomal complex and initiation factors eIF-1, eIF-1A and eIF-3 to form the 43S pre-initiation complex (43S PIC), a step that determines the rate of protein translation. The 43S PIC binds to mRNA and scans downstream to the initiation codon, where it forms a 48S initiation complex by codon-anticodon base pairing. This leads to the displacement of eIF-1 to allow GTPase-activating protein (GAP) eIF-5-mediated hydrolysis of eIF2-bound GTP. Hydrolysis of GTP and release of Pi, which makes GTP hydrolysis irreversible, causes the release of the eIF-2-GDP binary complex from the 40S subunit, an event that is essential for the subsequent joining of the 60S ribosomal subunit to form an elongation-competent 80S ribosome. In order for eIF-2 to recycle and catalyze another round of initiation, the GDP bound to eIF-2 must be exchanged with GTP by way of a reaction catalyzed by GDP-GTP exchange factor (GEF) eIF-2B. This chain is Eukaryotic translation initiation factor 2 subunit 3, found in Drosophila melanogaster (Fruit fly).